The chain runs to 679 residues: Methionine--tRNA ligase (679 aa).

The short motif at 12-22 (PYANGPIHIGH) is the 'HIGH' region element. Zn(2+)-binding residues include C143, C146, C156, and C158. A 'KMSKS' region motif is present at residues 328–332 (KMSKS). Position 331 (K331) interacts with ATP. Residues 537–564 (MMEESKDEAAQETGAAATNPFNDSDQPL) form a disordered region. The region spanning 577-679 (DFMKVDLRVA…EGALPGQRVH (103 aa)) is the tRNA-binding domain.

The protein belongs to the class-I aminoacyl-tRNA synthetase family. MetG type 1 subfamily. In terms of assembly, homodimer. Zn(2+) serves as cofactor.

It localises to the cytoplasm. It carries out the reaction tRNA(Met) + L-methionine + ATP = L-methionyl-tRNA(Met) + AMP + diphosphate. Is required not only for elongation of protein synthesis but also for the initiation of all mRNA translation through initiator tRNA(fMet) aminoacylation. This Rhodopirellula baltica (strain DSM 10527 / NCIMB 13988 / SH1) protein is Methionine--tRNA ligase.